We begin with the raw amino-acid sequence, 144 residues long: C-C motif chemokine 25 (144 aa).

Positions 1-23 (MKLWLFACLVACFVGAWMPVVHA) are cleaved as a signal peptide. Intrachain disulfides connect C30–C58 and C31–C73. The tract at residues 98–144 (KSASDSQTERKKSNHMKSKVENPNSTSVRSATLGHPRMVMMPRKTNN) is disordered. Residues 118–127 (ENPNSTSVRS) are compositionally biased toward polar residues.

It belongs to the intercrine beta (chemokine CC) family. In terms of tissue distribution, specifically expressed by thymic dendritic cells. High levels in thymus and small intestine.

Its subcellular location is the secreted. Functionally, potentially involved in T-cell development. Recombinant protein shows chemotactic activity on thymocytes, macrophages, THP-1 cells, and dendritics cells but is inactive on peripheral blood lymphocytes and neutrophils. Binds to CCR9. Binds to atypical chemokine receptor ACKR4 and mediates the recruitment of beta-arrestin (ARRB1/2) to ACKR4. This Mus musculus (Mouse) protein is C-C motif chemokine 25 (Ccl25).